We begin with the raw amino-acid sequence, 120 residues long: Ribonuclease P protein component (120 aa).

It belongs to the RnpA family. As to quaternary structure, consists of a catalytic RNA component (M1 or rnpB) and a protein subunit.

It carries out the reaction Endonucleolytic cleavage of RNA, removing 5'-extranucleotides from tRNA precursor.. Functionally, RNaseP catalyzes the removal of the 5'-leader sequence from pre-tRNA to produce the mature 5'-terminus. It can also cleave other RNA substrates such as 4.5S RNA. The protein component plays an auxiliary but essential role in vivo by binding to the 5'-leader sequence and broadening the substrate specificity of the ribozyme. This Rickettsia bellii (strain RML369-C) protein is Ribonuclease P protein component.